A 97-amino-acid polypeptide reads, in one-letter code: MSLGGVSEASRATPEIQMIANKVRPQLEAKTNKKYEKFEAVEYKTQVVAGENIFIKMDVGHGCFIHIKVFNGPTGKDNYELHGYQTDKTMDEELTYF.

The short motif at 46–50 (QVVAG) is the Secondary area of contact element.

This sequence belongs to the cystatin family.

The protein resides in the cytoplasm. This is an intracellular thiol proteinase inhibitor. In Mus musculus (Mouse), this protein is Stefin-1 (Stfa1).